A 563-amino-acid chain; its full sequence is Probable lysosomal cobalamin transporter (563 aa).

The next 5 helical transmembrane spans lie at 8-28 (LIWF…SVFI), 40-60 (FVTF…MLLP), 95-115 (VIYY…IPFA), 144-164 (YTLA…FAPM), and 188-208 (AFTF…VFYT). N-linked (GlcNAc...) asparagine glycosylation occurs at Asn-228. 4 helical membrane passes run 314–334 (GGFS…MTVI), 374–394 (IIFA…VVAV), 416–436 (MLLA…SVVM), and 506–526 (FGAL…VILV). The segment at 537 to 563 (ERQLDEDAEEAEEESLLASTGRSGNPT) is disordered. Residues 539-551 (QLDEDAEEAEEES) show a composition bias toward acidic residues.

Belongs to the LIMR family. LMBRD1 subfamily.

Its subcellular location is the lysosome membrane. Its function is as follows. Probable lysosomal cobalamin transporter. Required to export cobalamin from lysosomes allowing its conversion to cofactors. In Neosartorya fischeri (strain ATCC 1020 / DSM 3700 / CBS 544.65 / FGSC A1164 / JCM 1740 / NRRL 181 / WB 181) (Aspergillus fischerianus), this protein is Probable lysosomal cobalamin transporter.